The sequence spans 377 residues: Glutamate 5-kinase (377 aa).

Lysine 20 contacts ATP. Residues serine 60, aspartate 147, and asparagine 159 each contribute to the substrate site. 179–180 (TD) contributes to the ATP binding site. In terms of domain architecture, PUA spans 285–363 (AGRLVIDDGA…DKVYQVLGEA (79 aa)).

Belongs to the glutamate 5-kinase family.

The protein localises to the cytoplasm. The catalysed reaction is L-glutamate + ATP = L-glutamyl 5-phosphate + ADP. Its pathway is amino-acid biosynthesis; L-proline biosynthesis; L-glutamate 5-semialdehyde from L-glutamate: step 1/2. Catalyzes the transfer of a phosphate group to glutamate to form L-glutamate 5-phosphate. This Acinetobacter baumannii (strain AB307-0294) protein is Glutamate 5-kinase.